The following is a 252-amino-acid chain: Trans-aconitate 2-methyltransferase (252 aa).

Belongs to the methyltransferase superfamily. Tam family.

The protein localises to the cytoplasm. The catalysed reaction is trans-aconitate + S-adenosyl-L-methionine = (E)-3-(methoxycarbonyl)pent-2-enedioate + S-adenosyl-L-homocysteine. In terms of biological role, catalyzes the S-adenosylmethionine monomethyl esterification of trans-aconitate. This is Trans-aconitate 2-methyltransferase from Enterobacter sp. (strain 638).